Reading from the N-terminus, the 91-residue chain is Probable Fe(2+)-trafficking protein (91 aa).

The protein belongs to the Fe(2+)-trafficking protein family.

Its function is as follows. Could be a mediator in iron transactions between iron acquisition and iron-requiring processes, such as synthesis and/or repair of Fe-S clusters in biosynthetic enzymes. This is Probable Fe(2+)-trafficking protein from Paraburkholderia phymatum (strain DSM 17167 / CIP 108236 / LMG 21445 / STM815) (Burkholderia phymatum).